The following is a 485-amino-acid chain: Aspartyl/glutamyl-tRNA(Asn/Gln) amidotransferase subunit B (485 aa).

It belongs to the GatB/GatE family. GatB subfamily. In terms of assembly, heterotrimer of A, B and C subunits.

The enzyme catalyses L-glutamyl-tRNA(Gln) + L-glutamine + ATP + H2O = L-glutaminyl-tRNA(Gln) + L-glutamate + ADP + phosphate + H(+). The catalysed reaction is L-aspartyl-tRNA(Asn) + L-glutamine + ATP + H2O = L-asparaginyl-tRNA(Asn) + L-glutamate + ADP + phosphate + 2 H(+). Its function is as follows. Allows the formation of correctly charged Asn-tRNA(Asn) or Gln-tRNA(Gln) through the transamidation of misacylated Asp-tRNA(Asn) or Glu-tRNA(Gln) in organisms which lack either or both of asparaginyl-tRNA or glutaminyl-tRNA synthetases. The reaction takes place in the presence of glutamine and ATP through an activated phospho-Asp-tRNA(Asn) or phospho-Glu-tRNA(Gln). The sequence is that of Aspartyl/glutamyl-tRNA(Asn/Gln) amidotransferase subunit B from Opitutus terrae (strain DSM 11246 / JCM 15787 / PB90-1).